Here is an 835-residue protein sequence, read N- to C-terminus: Protein translocase subunit SecA (835 aa).

Residues Q85, 103-107, and D492 contribute to the ATP site; that span reads GEGKT. The segment at 788–807 is disordered; sequence VQGEAVHPSSDGEEAKKKPV. Residues C819, C821, C830, and C831 each contribute to the Zn(2+) site.

Belongs to the SecA family. Monomer and homodimer. Part of the essential Sec protein translocation apparatus which comprises SecA, SecYEG and auxiliary proteins SecDF. Other proteins may also be involved. The cofactor is Zn(2+).

The protein resides in the cell membrane. Its subcellular location is the cytoplasm. It carries out the reaction ATP + H2O + cellular proteinSide 1 = ADP + phosphate + cellular proteinSide 2.. Its function is as follows. Part of the Sec protein translocase complex. Interacts with the SecYEG preprotein conducting channel. Has a central role in coupling the hydrolysis of ATP to the transfer of proteins into and across the cell membrane, serving as an ATP-driven molecular motor driving the stepwise translocation of polypeptide chains across the membrane. The polypeptide is Protein translocase subunit SecA (Bacillus cereus (strain B4264)).